We begin with the raw amino-acid sequence, 791 residues long: IQ motif and ubiquitin-like domain-containing protein (791 aa).

The disordered stretch occupies residues 1–73; it reads MSNQQEKYEA…SDQSFSSLEP (73 aa). The region spanning 131–207 is the Ubiquitin-like domain; the sequence is ATVKVVLIPV…VQVEIFSTNP (77 aa). The IQ domain occupies 338–367; that stretch reads RLKAVIVIQTYYRQWHAKIFVENLRRQKSL.

Component of the axonemal radial spoke 1 (RS1) complex, at least composed of spoke head proteins RSPH1, RSPH3, RSPH9 and the cilia-specific component RSPH4A or sperm-specific component RSPH6A, spoke stalk proteins RSPH14, DNAJB13, DYDC1, ROPN1L and NME5, and the anchor protein IQUB. Does not appear to be part of radial spoke complexes 2 or 3 (RS2 or RS3). Interacts with CALM1. Interacts with DNAJB13. Interacts with DYNLL2. Interacts with NME5. Interacts with RSPH3. Interacts with RSPH9. Interacts with ZMYND10. Interacts with calmodulin; the interaction occurs in conditions of low but not high calcium.

It localises to the cytoplasm. The protein resides in the cytoskeleton. Its subcellular location is the flagellum axoneme. The protein localises to the cell projection. It is found in the cilium. Its function is as follows. Adapter protein that anchors the radial spoke 1 (RS1) complex to the A microtubule of outer doublet microtubules in axonemes. The triple radial spokes (RS1, RS2 and RS3) are required to modulate beating of the sperm flagellum. May play a role in inhibiting signaling via MAPK1/ERK2 and MAPK3/ERK1. Additionally, may play a role in the functioning of cilia. Not required for the functioning of tracheal or ependymal cilia. The chain is IQ motif and ubiquitin-like domain-containing protein (IQUB) from Homo sapiens (Human).